Consider the following 306-residue polypeptide: Curved DNA-binding protein (306 aa).

Residues 5–69 (DYYAIMGVKP…QRRAEYDQLW (65 aa)) form the J domain.

It is found in the cytoplasm. The protein localises to the nucleoid. Its function is as follows. DNA-binding protein that preferentially recognizes a curved DNA sequence. It is probably a functional analog of DnaJ; displays overlapping activities with DnaJ, but functions under different conditions, probably acting as a molecular chaperone in an adaptive response to environmental stresses other than heat shock. Lacks autonomous chaperone activity; binds native substrates and targets them for recognition by DnaK. Its activity is inhibited by the binding of CbpM. This is Curved DNA-binding protein from Salmonella paratyphi A (strain ATCC 9150 / SARB42).